The sequence spans 148 residues: Transcriptional regulator MraZ (148 aa).

SpoVT-AbrB domains are found at residues 5 to 51 (VATV…PLPE) and 80 to 123 (AHDI…NEAR).

This sequence belongs to the MraZ family. Forms oligomers.

It is found in the cytoplasm. The protein localises to the nucleoid. This chain is Transcriptional regulator MraZ, found in Thiobacillus denitrificans (strain ATCC 25259 / T1).